Reading from the N-terminus, the 291-residue chain is N-acetylmannosamine kinase (291 aa).

Residues 5–12 and 132–139 each bind ATP; these read AIDIGGTK and GVGGGVVS. Zn(2+)-binding residues include His-156, Cys-166, Cys-168, and Cys-173.

It belongs to the ROK (NagC/XylR) family. NanK subfamily. Homodimer.

The catalysed reaction is an N-acyl-D-mannosamine + ATP = an N-acyl-D-mannosamine 6-phosphate + ADP + H(+). The protein operates within amino-sugar metabolism; N-acetylneuraminate degradation; D-fructose 6-phosphate from N-acetylneuraminate: step 2/5. Catalyzes the phosphorylation of N-acetylmannosamine (ManNAc) to ManNAc-6-P. The chain is N-acetylmannosamine kinase (nanK1) from Escherichia coli O6:H1 (strain CFT073 / ATCC 700928 / UPEC).